The sequence spans 302 residues: Ornithine carbamoyltransferase (302 aa).

Residues 52–55 (STRT), Gln-79, Arg-103, and 130–133 (HPCQ) contribute to the carbamoyl phosphate site. L-ornithine is bound by residues Asn-161, Asp-222, and 226–227 (SM). Residues 262–263 (CL) and Arg-290 each bind carbamoyl phosphate.

Belongs to the aspartate/ornithine carbamoyltransferase superfamily. OTCase family.

It localises to the cytoplasm. It carries out the reaction carbamoyl phosphate + L-ornithine = L-citrulline + phosphate + H(+). It functions in the pathway amino-acid biosynthesis; L-arginine biosynthesis; L-arginine from L-ornithine and carbamoyl phosphate: step 1/3. Functionally, reversibly catalyzes the transfer of the carbamoyl group from carbamoyl phosphate (CP) to the N(epsilon) atom of ornithine (ORN) to produce L-citrulline. This chain is Ornithine carbamoyltransferase, found in Syntrophus aciditrophicus (strain SB).